The primary structure comprises 109 residues: FK506-binding protein (109 aa).

Positions 20–108 constitute a PPIase FKBP-type domain; that stretch reads GKEITVHYTG…IFEVELLKVY (89 aa).

Belongs to the FKBP-type PPIase family.

The enzyme catalyses [protein]-peptidylproline (omega=180) = [protein]-peptidylproline (omega=0). Its activity is regulated as follows. Inhibited by FK506. PPIases accelerate the folding of proteins. This is FK506-binding protein (fbp) from Neisseria meningitidis serogroup B (strain ATCC BAA-335 / MC58).